Reading from the N-terminus, the 373-residue chain is Dual-specificity RNA methyltransferase RlmN (373 aa).

The Proton acceptor role is filled by Glu94. Positions Glu100–Asp339 constitute a Radical SAM core domain. Cys107 and Cys344 form a disulfide bridge. [4Fe-4S] cluster is bound by residues Cys114, Cys118, and Cys121. Residues Gly168–Glu169, Ser200, Ser222–His224, and Asn301 contribute to the S-adenosyl-L-methionine site. The active-site S-methylcysteine intermediate is Cys344.

The protein belongs to the radical SAM superfamily. RlmN family. [4Fe-4S] cluster is required as a cofactor.

The protein localises to the cytoplasm. It catalyses the reaction adenosine(2503) in 23S rRNA + 2 reduced [2Fe-2S]-[ferredoxin] + 2 S-adenosyl-L-methionine = 2-methyladenosine(2503) in 23S rRNA + 5'-deoxyadenosine + L-methionine + 2 oxidized [2Fe-2S]-[ferredoxin] + S-adenosyl-L-homocysteine. The catalysed reaction is adenosine(37) in tRNA + 2 reduced [2Fe-2S]-[ferredoxin] + 2 S-adenosyl-L-methionine = 2-methyladenosine(37) in tRNA + 5'-deoxyadenosine + L-methionine + 2 oxidized [2Fe-2S]-[ferredoxin] + S-adenosyl-L-homocysteine. Specifically methylates position 2 of adenine 2503 in 23S rRNA and position 2 of adenine 37 in tRNAs. m2A2503 modification seems to play a crucial role in the proofreading step occurring at the peptidyl transferase center and thus would serve to optimize ribosomal fidelity. This chain is Dual-specificity RNA methyltransferase RlmN, found in Shewanella woodyi (strain ATCC 51908 / MS32).